The sequence spans 187 residues: Calcium and integrin-binding family member 2 (187 aa).

3 EF-hand domains span residues Arg-66–Ser-101, Pro-103–Ser-138, and Glu-144–Phe-179. Ca(2+) is bound by residues Asp-116, Asn-118, Asp-120, Asp-127, Asp-157, Asp-159, Asp-161, Lys-163, and Asp-168.

Monomer. Homodimer. Interacts with WHRN and MYO7A. Interacts with ITGA2B (via C-terminus cytoplasmic tail region); the interactions are stabilized/increased in a calcium and magnesium-dependent manner. Interacts with ITGA7 (via C-terminus cytoplasmic tail region); the interactions are stabilized/increased in a calcium and magnesium-dependent manner. Interacts with TMC1. Interacts with TMC2. In terms of tissue distribution, widely expressed.

Its subcellular location is the cytoplasm. It localises to the cell projection. It is found in the stereocilium. The protein resides in the photoreceptor inner segment. The protein localises to the cilium. Its subcellular location is the photoreceptor outer segment. It localises to the cell membrane. It is found in the sarcolemma. Functionally, calcium- and integrin-binding protein that plays a role in intracellular calcium homeostasis. Acts as an auxiliary subunit of the sensory mechanoelectrical transduction (MET) channel in hair cells. Essential for mechanoelectrical transduction (MET) currents in auditory hair cells and thereby required for hearing. Regulates the function of hair cell mechanotransduction by controlling the distribution of transmembrane channel-like proteins TMC1 and TMC2, and by regulating the function of the MET channels in hair cells. Required for the maintenance of auditory hair cell stereocilia bundle morphology and function and for hair-cell survival in the cochlea. Critical for proper photoreceptor cell maintenance and function. Plays a role in intracellular calcium homeostasis by decreasing ATP-induced calcium release. The protein is Calcium and integrin-binding family member 2 (CIB2) of Homo sapiens (Human).